The chain runs to 676 residues: Pescadillo homolog (676 aa).

The stretch at 298 to 327 (IAAMADDEDEQEVEMAEADAEDDDEEENTE) forms a coiled coil. 4 disordered regions span residues 298 to 338 (IAAM…TAPD), 413 to 439 (PLAN…STKP), 478 to 502 (VKPK…EAEA), and 515 to 676 (EVDD…AERA). A compositionally biased stretch (acidic residues) spans 302-327 (ADDEDEQEVEMAEADAEDDDEEENTE). The region spanning 351–466 (EIASLFAPFT…KLLRPDLYAP (116 aa)) is the BRCT domain. Over residues 415–427 (ANGASAAGAEDAA) the composition is skewed to low complexity. Composition is skewed to acidic residues over residues 515 to 524 (EVDDDEDMDA), 539 to 557 (DVAD…DAEG), and 565 to 577 (FDDE…DISE). Residues 568-676 (ESEAESDISE…EKAKAAAERA (109 aa)) are a coiled coil. Basic and acidic residues-rich tracts occupy residues 579–608 (EAAR…KKEQ), 620–631 (KRAEEEERDRQK), 643–659 (KRIE…SENL), and 666–676 (LEKAKAAAERA).

It belongs to the pescadillo family. Component of the NOP7 complex, composed of ERB1, NOP7 and YTM1. The complex is held together by ERB1, which interacts with NOP7 via its N-terminal domain and with YTM1 via a high-affinity interaction between the seven-bladed beta-propeller domains of the 2 proteins. The NOP7 complex associates with the 66S pre-ribosome.

Its subcellular location is the nucleus. It localises to the nucleolus. It is found in the nucleoplasm. Functionally, component of the NOP7 complex, which is required for maturation of the 25S and 5.8S ribosomal RNAs and formation of the 60S ribosome. The polypeptide is Pescadillo homolog (Phaeosphaeria nodorum (strain SN15 / ATCC MYA-4574 / FGSC 10173) (Glume blotch fungus)).